The primary structure comprises 845 residues: ATP-binding cassette sub-family F member 1 (845 aa).

Residues 1–261 (MPKAPKQQPP…HLSKKEKKKL (261 aa)) form a disordered region. Serine 22 and serine 24 each carry phosphoserine. Over residues 29–39 (KKGKKDKKIKK) the composition is skewed to basic residues. Residues 47 to 64 (VEDKQAGEEEKVLKEKEQ) are compositionally biased toward basic and acidic residues. Residues 73 to 85 (QKKKRDTRKGRRK) show a composition bias toward basic residues. The residue at position 105 (serine 105) is a Phosphoserine. Threonine 108 carries the post-translational modification Phosphothreonine. A phosphoserine; by CK2 mark is found at serine 109 and serine 140. The span at 147–160 (EKHPPKPAKPEKNR) shows a compositional bias: basic and acidic residues. A Phosphoserine modification is found at serine 166. Basic and acidic residues predominate over residues 206–226 (EIIKEKEPPKQGKEKAKKAEQ). Over residues 227–241 (GSEEEGEGEEEEEEG) the composition is skewed to acidic residues. Phosphoserine is present on serine 228. Positions 304–548 (IKLEKFSISA…MYQQKQKELL (245 aa)) constitute an ABC transporter 1 domain. 336 to 343 (GPNGKGKT) lines the ATP pocket. Residues 559-580 (KELKAGGKSTKQAEKQTKEALT) are compositionally biased toward basic and acidic residues. The tract at residues 559 to 602 (KELKAGGKSTKQAEKQTKEALTRKQQKCRRKNQDEESQEAPELL) is disordered. Serine 595 bears the Phosphoserine mark. Residues 625 to 840 (LGLHGVTFGY…VLEALGEVMV (216 aa)) enclose the ABC transporter 2 domain. Position 658–665 (658–665 (GPNGVGKS)) interacts with ATP.

It belongs to the ABC transporter superfamily. ABCF family. EF3 subfamily. As to quaternary structure, isoform 2 interacts (via N-terminus) with EIF2S1; the interaction is independent of its phosphorylated status. Isoform 2 associates (via both ABC transporter domains) with the ribosomes. Isoform 2 is phosphorylated at phosphoserine and phosphothreonine. Isoform 2 phosphorylation on Ser-109 and Ser-140 by CK2 inhibits association of EIF2 with ribosomes. As to expression, ubiquitous.

It localises to the cytoplasm. The protein localises to the nucleus. The protein resides in the nucleoplasm. Its subcellular location is the nucleus envelope. Its function is as follows. Isoform 2 is required for efficient Cap- and IRES-mediated mRNA translation initiation. Isoform 2 is not involved in the ribosome biogenesis. This is ATP-binding cassette sub-family F member 1 (ABCF1) from Homo sapiens (Human).